The sequence spans 499 residues: Maturase K (499 aa).

Belongs to the intron maturase 2 family. MatK subfamily.

It localises to the plastid. The protein resides in the chloroplast. Its function is as follows. Usually encoded in the trnK tRNA gene intron. Probably assists in splicing its own and other chloroplast group II introns. The protein is Maturase K of Ceratozamia mexicana (Mexican horncone).